The chain runs to 46 residues: Mu-segestritoxin-Sf1c (46 aa).

Intrachain disulfides connect cysteine 3–cysteine 19, cysteine 10–cysteine 22, cysteine 18–cysteine 42, and cysteine 24–cysteine 40. The tract at residues 31–33 (RPW) is keys region for toxin activity.

Belongs to the neurotoxin 16 (SFI) family. Expressed by the venom gland.

It is found in the secreted. Its function is as follows. Insecticidal toxin. It inhibits insect voltage-gated sodium channels (Nav) by partially blocking the channel pore in DUM neurons from the American cockroach, not by acting as a gating modifier. The inhibition is only partially reversible after prolonged washout. In vivo, the toxin causes flaccid paralysis followed by death when injected into Heliothis virescens larvae. It also causes uncoordinated movements followed by full paralysis to sheep blowflies (Lucilia cuprina). When the toxin is fused to snowdrop lectin, it is orally active against larvae of the tomato moth (Laconobia oleracea), the rice brown planthopper (Nilaparvata lugens), and the peach-potato aphid (Myzus persicae). The chain is Mu-segestritoxin-Sf1c from Segestria florentina (Tube-web spider).